The chain runs to 314 residues: MTKFEIECVESTTDGARDHYSKFCLEPLEQGQGVTLGNALRRTLLSDLEGTAIVAVRIAGVSHEFSTIPGIREDVLEILLNLKEVVLKSQTKNPSVGRLRVQGPAIVTTSNLELPSEVELIDPNQYIATICGNNILEMEFRIETGKGYHLIERSIDETSIDFLQVDAIFMPVKKVNYLTKDIRSNDNLLQEQLLLEVWTNGSIDPQDAVSQGGKILTELLHPLKEINFKSDEEDTVAEDSKINQILIEELQLSVRAYNCLKRAQIHSVADLLDYSQEDLIEIKNFGQKSAEEVIDALQKRLGINLPKEKTVKPN.

An alpha N-terminal domain (alpha-NTD) region spans residues 1–227; sequence MTKFEIECVE…ELLHPLKEIN (227 aa). Residues 241–314 form an alpha C-terminal domain (alpha-CTD) region; the sequence is KINQILIEEL…LPKEKTVKPN (74 aa).

This sequence belongs to the RNA polymerase alpha chain family. In plastids the minimal PEP RNA polymerase catalytic core is composed of four subunits: alpha, beta, beta', and beta''. When a (nuclear-encoded) sigma factor is associated with the core the holoenzyme is formed, which can initiate transcription.

The protein localises to the plastid. The protein resides in the chloroplast. The enzyme catalyses RNA(n) + a ribonucleoside 5'-triphosphate = RNA(n+1) + diphosphate. In terms of biological role, DNA-dependent RNA polymerase catalyzes the transcription of DNA into RNA using the four ribonucleoside triphosphates as substrates. This Rhodomonas salina (Cryptomonas salina) protein is DNA-directed RNA polymerase subunit alpha.